The following is a 470-amino-acid chain: Methylenetetrahydrofolate--tRNA-(uracil-5-)-methyltransferase TrmFO (470 aa).

FAD is bound at residue 10–15 (GAGLAG).

It belongs to the MnmG family. TrmFO subfamily. FAD is required as a cofactor.

It localises to the cytoplasm. It catalyses the reaction uridine(54) in tRNA + (6R)-5,10-methylene-5,6,7,8-tetrahydrofolate + NADH + H(+) = 5-methyluridine(54) in tRNA + (6S)-5,6,7,8-tetrahydrofolate + NAD(+). The enzyme catalyses uridine(54) in tRNA + (6R)-5,10-methylene-5,6,7,8-tetrahydrofolate + NADPH + H(+) = 5-methyluridine(54) in tRNA + (6S)-5,6,7,8-tetrahydrofolate + NADP(+). Functionally, catalyzes the folate-dependent formation of 5-methyl-uridine at position 54 (M-5-U54) in all tRNAs. The chain is Methylenetetrahydrofolate--tRNA-(uracil-5-)-methyltransferase TrmFO from Prochlorococcus marinus (strain MIT 9301).